The sequence spans 318 residues: RNA polymerase II transcription factor B subunit 3 (318 aa).

The segment at Cys-13–Cys-54 adopts an RING-type zinc-finger fold.

As to quaternary structure, one of the nine subunits forming the core-TFIIH basal transcription factor. Also interacts with skp1 and with the mcs2-mcs6 complex.

Its subcellular location is the cytoplasm. The protein localises to the nucleus. Its function is as follows. Acts as a component of the general transcription and DNA repair factor IIH (TFIIH or factor B), which is essential for both basal and activated transcription, and is involved in nucleotide excision repair (NER) of damaged DNA. TFIIH has CTD kinase activity and DNA-dependent ATPase activity, and is essential for polymerase II transcription. This chain is RNA polymerase II transcription factor B subunit 3 (pmh1), found in Schizosaccharomyces pombe (strain 972 / ATCC 24843) (Fission yeast).